Reading from the N-terminus, the 320-residue chain is ATP-dependent 6-phosphofructokinase (320 aa).

Glycine 12 lines the ATP pocket. Arginine 22–arginine 26 contacts ADP. ATP is bound by residues arginine 73–phenylalanine 74 and glycine 103–serine 106. A Mg(2+)-binding site is contributed by aspartate 104. Position 126–128 (threonine 126–aspartate 128) interacts with substrate. Aspartate 128 serves as the catalytic Proton acceptor. Arginine 155 provides a ligand contact to ADP. Substrate-binding positions include arginine 163 and methionine 170–arginine 172. ADP contacts are provided by residues glycine 186–glutamate 188 and lysine 214–histidine 216. Residues glutamate 223, arginine 244, and histidine 250–arginine 253 contribute to the substrate site.

Belongs to the phosphofructokinase type A (PFKA) family. ATP-dependent PFK group I subfamily. Prokaryotic clade 'B1' sub-subfamily. Homotetramer. Mg(2+) is required as a cofactor.

Its subcellular location is the cytoplasm. It carries out the reaction beta-D-fructose 6-phosphate + ATP = beta-D-fructose 1,6-bisphosphate + ADP + H(+). It participates in carbohydrate degradation; glycolysis; D-glyceraldehyde 3-phosphate and glycerone phosphate from D-glucose: step 3/4. Its activity is regulated as follows. Allosterically activated by ADP and other diphosphonucleosides, and allosterically inhibited by phosphoenolpyruvate. Functionally, catalyzes the phosphorylation of D-fructose 6-phosphate to fructose 1,6-bisphosphate by ATP, the first committing step of glycolysis. This Tolumonas auensis (strain DSM 9187 / NBRC 110442 / TA 4) protein is ATP-dependent 6-phosphofructokinase.